Here is a 793-residue protein sequence, read N- to C-terminus: DNA mismatch repair protein MutS (793 aa).

ATP is bound at residue 589-596; the sequence is GPNMSGKS.

Belongs to the DNA mismatch repair MutS family.

This protein is involved in the repair of mismatches in DNA. It is possible that it carries out the mismatch recognition step. This protein has a weak ATPase activity. The protein is DNA mismatch repair protein MutS of Thermotoga petrophila (strain ATCC BAA-488 / DSM 13995 / JCM 10881 / RKU-1).